The chain runs to 474 residues: Nitric oxide reductase subunit B (474 aa).

The chain crosses the membrane as a helical span at residues 19–39 (YFVFALILFVGQVLFGLIMGL). H60 lines the heme b pocket. Helical transmembrane passes span 61-81 (TNLLIVWLLFGFMGAAYYLIP), 95-115 (IILFWVFAAAGVLTILGYLFV), 145-165 (IGIVVVALGFLYNIGMTMLKG), 169-189 (VVSTVMMTGLIGLAVFFLFAF), 207-227 (HLWVEGVWELIMGAMLAFVLI), 243-263 (VIIAMALITGIIGTGHHFFWI), 270-290 (LWVGSIFSALEPLPFFAMVLF), and 308-328 (SLWAIGTTVTAFLGAGVWGFM). Positions 207, 258, and 259 each coordinate Fe cation. H347 and H349 together coordinate heme b. Transmembrane regions (helical) follow at residues 348–368 (GHLAFYGAYAMIVMTMISYAM), 390–410 (FWLMTISMIAITLFLTAAGVV), and 433–453 (LAIFFWLRFIAGVFFLIGLVC).

This sequence belongs to the heme-copper respiratory oxidase family. Heterodimer of cytochromes b (large subunit) and c (small subunit).

Its subcellular location is the cell membrane. The enzyme catalyses nitrous oxide + 2 Fe(III)-[cytochrome c] + H2O = 2 nitric oxide + 2 Fe(II)-[cytochrome c] + 2 H(+). The protein operates within nitrogen metabolism; nitrate reduction (denitrification); dinitrogen from nitrate: step 3/4. In terms of biological role, component of the anaerobic respiratory chain that transforms nitrate to dinitrogen (denitrification). NorB is the catalytic subunit of the enzyme complex. Shows proton pump activity across the membrane in denitrifying bacterial cells. The mononitrogen reduction is probably coupled to electron transport phosphorylation. The polypeptide is Nitric oxide reductase subunit B (norB) (Stutzerimonas stutzeri (Pseudomonas stutzeri)).